Reading from the N-terminus, the 306-residue chain is uncharacterized protein (306 aa).

It to M.jannaschii MJ0658.

This is an uncharacterized protein from Methanothermobacter thermautotrophicus (strain ATCC 29096 / DSM 1053 / JCM 10044 / NBRC 100330 / Delta H) (Methanobacterium thermoautotrophicum).